Consider the following 337-residue polypeptide: D-alanine--D-alanine ligase (337 aa).

Residues 124–330 (KMWFSALGIP…FTEYLSLVIN (207 aa)) enclose the ATP-grasp domain. 154-209 (ALANWGSIFIKAASQGSSVGCYKVDDSSKVAQVLKDAFGYAPYVVVEKTIKARELE) contributes to the ATP binding site. Positions 284, 297, and 299 each coordinate Mg(2+).

The protein belongs to the D-alanine--D-alanine ligase family. It depends on Mg(2+) as a cofactor. The cofactor is Mn(2+).

Its subcellular location is the cytoplasm. It catalyses the reaction 2 D-alanine + ATP = D-alanyl-D-alanine + ADP + phosphate + H(+). It functions in the pathway cell wall biogenesis; peptidoglycan biosynthesis. Its function is as follows. Cell wall formation. This chain is D-alanine--D-alanine ligase, found in Shewanella sp. (strain W3-18-1).